The sequence spans 122 residues: Large ribosomal subunit protein uL14c (122 aa).

Belongs to the universal ribosomal protein uL14 family. In terms of assembly, part of the 50S ribosomal subunit.

Its subcellular location is the plastid. It is found in the chloroplast. Functionally, binds to 23S rRNA. The protein is Large ribosomal subunit protein uL14c of Adiantum capillus-veneris (Maidenhair fern).